The sequence spans 432 residues: Glutamate-1-semialdehyde 2,1-aminomutase 1 (432 aa).

Position 268 is an N6-(pyridoxal phosphate)lysine (K268).

The protein belongs to the class-III pyridoxal-phosphate-dependent aminotransferase family. HemL subfamily. As to quaternary structure, homodimer. Pyridoxal 5'-phosphate is required as a cofactor.

It is found in the cytoplasm. The enzyme catalyses (S)-4-amino-5-oxopentanoate = 5-aminolevulinate. The protein operates within porphyrin-containing compound metabolism; protoporphyrin-IX biosynthesis; 5-aminolevulinate from L-glutamyl-tRNA(Glu): step 2/2. In Bacillus licheniformis (strain ATCC 14580 / DSM 13 / JCM 2505 / CCUG 7422 / NBRC 12200 / NCIMB 9375 / NCTC 10341 / NRRL NRS-1264 / Gibson 46), this protein is Glutamate-1-semialdehyde 2,1-aminomutase 1.